Consider the following 241-residue polypeptide: Small ribosomal subunit protein eS4 (241 aa).

The region spanning 43–105 (IPLVMVLRDI…INKTFRVLQD (63 aa)) is the S4 RNA-binding domain.

This sequence belongs to the eukaryotic ribosomal protein eS4 family.

This is Small ribosomal subunit protein eS4 from Methanosphaera stadtmanae (strain ATCC 43021 / DSM 3091 / JCM 11832 / MCB-3).